We begin with the raw amino-acid sequence, 177 residues long: Adenine phosphoribosyltransferase (177 aa).

Belongs to the purine/pyrimidine phosphoribosyltransferase family. In terms of assembly, homodimer.

It localises to the cytoplasm. The enzyme catalyses AMP + diphosphate = 5-phospho-alpha-D-ribose 1-diphosphate + adenine. It functions in the pathway purine metabolism; AMP biosynthesis via salvage pathway; AMP from adenine: step 1/1. Functionally, catalyzes a salvage reaction resulting in the formation of AMP, that is energically less costly than de novo synthesis. The polypeptide is Adenine phosphoribosyltransferase (Chlorobium limicola (strain DSM 245 / NBRC 103803 / 6330)).